Consider the following 313-residue polypeptide: D-alanine--D-alanine ligase (313 aa).

One can recognise an ATP-grasp domain in the interval 108 to 308 (KLVWQQTGVP…YSELVVKVLS (201 aa)). Residue 138–193 (VAKLGLPLFVKPASEGSSVAVLKVKTADALPAALSEAATHDKIVIVEKSIEGGGEY) coordinates ATP. Mg(2+) contacts are provided by Asp-262, Glu-275, and Asn-277.

The protein belongs to the D-alanine--D-alanine ligase family. It depends on Mg(2+) as a cofactor. The cofactor is Mn(2+).

It localises to the cytoplasm. It carries out the reaction 2 D-alanine + ATP = D-alanyl-D-alanine + ADP + phosphate + H(+). It participates in cell wall biogenesis; peptidoglycan biosynthesis. Its function is as follows. Cell wall formation. In Burkholderia vietnamiensis (strain G4 / LMG 22486) (Burkholderia cepacia (strain R1808)), this protein is D-alanine--D-alanine ligase.